The following is a 103-amino-acid chain: Large ribosomal subunit protein bL21 (103 aa).

The span at 83–92 shows a compositional bias: basic residues; sequence YRRKKGHRQP. Positions 83–103 are disordered; it reads YRRKKGHRQPFSRVTVEKIEA.

This sequence belongs to the bacterial ribosomal protein bL21 family. Part of the 50S ribosomal subunit. Contacts protein L20.

Its function is as follows. This protein binds to 23S rRNA in the presence of protein L20. The polypeptide is Large ribosomal subunit protein bL21 (Pelotomaculum thermopropionicum (strain DSM 13744 / JCM 10971 / SI)).